Consider the following 355-residue polypeptide: UDP-N-acetylglucosamine--N-acetylmuramyl-(pentapeptide) pyrophosphoryl-undecaprenol N-acetylglucosamine transferase (355 aa).

UDP-N-acetyl-alpha-D-glucosamine contacts are provided by residues 13-15 (TGG), Asn125, Arg162, Ser190, Ile244, and Gln289.

The protein belongs to the glycosyltransferase 28 family. MurG subfamily.

Its subcellular location is the cell inner membrane. The enzyme catalyses di-trans,octa-cis-undecaprenyl diphospho-N-acetyl-alpha-D-muramoyl-L-alanyl-D-glutamyl-meso-2,6-diaminopimeloyl-D-alanyl-D-alanine + UDP-N-acetyl-alpha-D-glucosamine = di-trans,octa-cis-undecaprenyl diphospho-[N-acetyl-alpha-D-glucosaminyl-(1-&gt;4)]-N-acetyl-alpha-D-muramoyl-L-alanyl-D-glutamyl-meso-2,6-diaminopimeloyl-D-alanyl-D-alanine + UDP + H(+). The protein operates within cell wall biogenesis; peptidoglycan biosynthesis. Its function is as follows. Cell wall formation. Catalyzes the transfer of a GlcNAc subunit on undecaprenyl-pyrophosphoryl-MurNAc-pentapeptide (lipid intermediate I) to form undecaprenyl-pyrophosphoryl-MurNAc-(pentapeptide)GlcNAc (lipid intermediate II). The protein is UDP-N-acetylglucosamine--N-acetylmuramyl-(pentapeptide) pyrophosphoryl-undecaprenol N-acetylglucosamine transferase of Neisseria meningitidis serogroup A / serotype 4A (strain DSM 15465 / Z2491).